Reading from the N-terminus, the 143-residue chain is Cytochrome c-type biogenesis protein CcmE (143 aa).

Topologically, residues 1–8 are cytoplasmic; that stretch reads MNPVRRRK. Residues 9–29 form a helical; Signal-anchor for type II membrane protein membrane-spanning segment; that stretch reads LFILLFALTILSAAAALVLYA. Residues 30–143 are Periplasmic-facing; that stretch reads LRQNISLFYT…KSALADKVKQ (114 aa). Residues H124 and Y128 each coordinate heme.

It belongs to the CcmE/CycJ family.

The protein resides in the cell inner membrane. Its function is as follows. Heme chaperone required for the biogenesis of c-type cytochromes. Transiently binds heme delivered by CcmC and transfers the heme to apo-cytochromes in a process facilitated by CcmF and CcmH. This Legionella pneumophila (strain Corby) protein is Cytochrome c-type biogenesis protein CcmE.